The primary structure comprises 202 residues: Small ribosomal subunit protein uS4 (202 aa).

The 63-residue stretch at 93–155 (RRLDNVVRRV…ENLKNLYRGV (63 aa)) folds into the S4 RNA-binding domain.

Belongs to the universal ribosomal protein uS4 family. As to quaternary structure, part of the 30S ribosomal subunit. Contacts protein S5. The interaction surface between S4 and S5 is involved in control of translational fidelity.

In terms of biological role, one of the primary rRNA binding proteins, it binds directly to 16S rRNA where it nucleates assembly of the body of the 30S subunit. Functionally, with S5 and S12 plays an important role in translational accuracy. This Rhodopirellula baltica (strain DSM 10527 / NCIMB 13988 / SH1) protein is Small ribosomal subunit protein uS4.